The chain runs to 428 residues: AP-1 complex subunit mu (428 aa).

At alanine 2 the chain carries N-acetylalanine; partial. The MHD domain maps to 169-426 (KNEVFLDVVE…VCLSGDYQFR (258 aa)).

This sequence belongs to the adaptor complexes medium subunit family. Adaptor protein complex 1 (AP-1) is a heterotetramer composed of two large adaptins (gamma-type subunit and beta-type subunit), a medium adaptin (mu-type subunit) and a small adaptin (sigma-type subunit).

It localises to the golgi apparatus. Its subcellular location is the trans-Golgi network. The protein resides in the cytoplasmic vesicle. It is found in the clathrin-coated vesicle membrane. Its function is as follows. Subunit of clathrin-associated adaptor protein complex 1 that plays a role in protein sorting in the trans-Golgi network (TGN) and endosomes. The AP complexes mediate the recruitment of clathrin to membranes and the recognition of sorting signals within the cytosolic tails of transmembrane cargo molecules. Also involved in early steps of phagocytosis and macropinocytosis. This Dictyostelium discoideum (Social amoeba) protein is AP-1 complex subunit mu (apm1).